Consider the following 388-residue polypeptide: LL-diaminopimelate aminotransferase (388 aa).

2 residues coordinate substrate: tyrosine 16 and glycine 41. Residues tyrosine 70, 104-105 (SK), tyrosine 129, asparagine 179, tyrosine 210, and 239-241 (SLS) each bind pyridoxal 5'-phosphate. 3 residues coordinate substrate: lysine 105, tyrosine 129, and asparagine 179. Lysine 242 is subject to N6-(pyridoxal phosphate)lysine. Arginine 250 contributes to the pyridoxal 5'-phosphate binding site. Arginine 368 contacts substrate.

Belongs to the class-I pyridoxal-phosphate-dependent aminotransferase family. LL-diaminopimelate aminotransferase subfamily. As to quaternary structure, homodimer. Requires pyridoxal 5'-phosphate as cofactor.

It catalyses the reaction (2S,6S)-2,6-diaminopimelate + 2-oxoglutarate = (S)-2,3,4,5-tetrahydrodipicolinate + L-glutamate + H2O + H(+). It functions in the pathway amino-acid biosynthesis; L-lysine biosynthesis via DAP pathway; LL-2,6-diaminopimelate from (S)-tetrahydrodipicolinate (aminotransferase route): step 1/1. Its function is as follows. Involved in the synthesis of meso-diaminopimelate (m-DAP or DL-DAP), required for both lysine and peptidoglycan biosynthesis. Catalyzes the direct conversion of tetrahydrodipicolinate to LL-diaminopimelate. The sequence is that of LL-diaminopimelate aminotransferase from Nitratidesulfovibrio vulgaris (strain DP4) (Desulfovibrio vulgaris).